Reading from the N-terminus, the 143-residue chain is MPPKKKVTGLIKLQIQAGAANPAPPIGPALGQHGVNIMEFCKAYNAATEAQRGNVIPVEITVYEDRSFTFITKTPPAAELIKKAAGVAKGSATPHTAKVASLTREQVREIAQTKLADLNANDIDAAEKIIAGTARSMGVTVTD.

The protein belongs to the universal ribosomal protein uL11 family. Part of the ribosomal stalk of the 50S ribosomal subunit. Interacts with L10 and the large rRNA to form the base of the stalk. L10 forms an elongated spine to which L12 dimers bind in a sequential fashion forming a multimeric L10(L12)X complex. Post-translationally, one or more lysine residues are methylated.

In terms of biological role, forms part of the ribosomal stalk which helps the ribosome interact with GTP-bound translation factors. The sequence is that of Large ribosomal subunit protein uL11 from Beutenbergia cavernae (strain ATCC BAA-8 / DSM 12333 / CCUG 43141 / JCM 11478 / NBRC 16432 / NCIMB 13614 / HKI 0122).